A 328-amino-acid chain; its full sequence is MLKHISSHIAMGCPQDECSICWESMPSGVGRLMPCGHEYHLACIRKWFHLHSGNRSCPVCRTEASVLVDTDHEVKIDLSVGQLLDFYGLLDEIGSQLLAITLQDHSTQDDEVNEEGLAEQRAQLTLVQCGICGEMNGDIDTCCNRCHHMYHHSCLGQLLVEVNAEREQGWSHCIFCYEQLVPLYISGARRVLSLQDRGVHRGRVRNNRSILTELIYERSGVLVHGIEDQHASQHDINDIEHSWHLLEQNRQRKQLEYQDKCKIQAHVRRILDHYYHCAKVTKAQYTFINKKVSQTLYALSRGVYPAVDLDYDGIAKTLILDEMEKLSS.

The RING-type 1; atypical zinc-finger motif lies at 18-61; that stretch reads CSICWESMPSGVGRLMPCGHEYHLACIRKWFHLHSGNRSCPVCR. Residues 129–177 form an RING-type 2; atypical zinc finger; the sequence is CGICGEMNGDIDTCCNRCHHMYHHSCLGQLLVEVNAEREQGWSHCIFCY.

It localises to the cytoplasm. It is found in the nucleus. Functionally, required for tolerance to alcohol. The sequence is that of Alcohol-sensitive RING finger protein 1 (ASR1) from Eremothecium gossypii (strain ATCC 10895 / CBS 109.51 / FGSC 9923 / NRRL Y-1056) (Yeast).